A 53-amino-acid chain; its full sequence is Large ribosomal subunit protein bL33A (53 aa).

The protein belongs to the bacterial ribosomal protein bL33 family.

The chain is Large ribosomal subunit protein bL33A from Mycoplasmoides gallisepticum (strain R(low / passage 15 / clone 2)) (Mycoplasma gallisepticum).